Reading from the N-terminus, the 194-residue chain is dITP/XTP pyrophosphatase (194 aa).

11–16 (SHNAGK) is a substrate binding site. The Proton acceptor role is filled by aspartate 70. Aspartate 70 is a Mg(2+) binding site. Residues serine 71, 149–152 (FGYD), lysine 172, and 177–178 (HR) each bind substrate.

It belongs to the HAM1 NTPase family. In terms of assembly, homodimer. It depends on Mg(2+) as a cofactor.

The catalysed reaction is XTP + H2O = XMP + diphosphate + H(+). It catalyses the reaction dITP + H2O = dIMP + diphosphate + H(+). It carries out the reaction ITP + H2O = IMP + diphosphate + H(+). In terms of biological role, pyrophosphatase that catalyzes the hydrolysis of nucleoside triphosphates to their monophosphate derivatives, with a high preference for the non-canonical purine nucleotides XTP (xanthosine triphosphate), dITP (deoxyinosine triphosphate) and ITP. Seems to function as a house-cleaning enzyme that removes non-canonical purine nucleotides from the nucleotide pool, thus preventing their incorporation into DNA/RNA and avoiding chromosomal lesions. This chain is dITP/XTP pyrophosphatase, found in Thermosynechococcus vestitus (strain NIES-2133 / IAM M-273 / BP-1).